A 783-amino-acid chain; its full sequence is Endonuclease MutS2 (783 aa).

Residue 328 to 335 coordinates ATP; sequence GPNTGGKT. In terms of domain architecture, Smr spans 708 to 783; that stretch reads LDLRGKRYEE…GSGCTIATLG (76 aa).

This sequence belongs to the DNA mismatch repair MutS family. MutS2 subfamily. As to quaternary structure, homodimer. Binds to stalled ribosomes, contacting rRNA.

In terms of biological role, endonuclease that is involved in the suppression of homologous recombination and thus may have a key role in the control of bacterial genetic diversity. Functionally, acts as a ribosome collision sensor, splitting the ribosome into its 2 subunits. Detects stalled/collided 70S ribosomes which it binds and splits by an ATP-hydrolysis driven conformational change. Acts upstream of the ribosome quality control system (RQC), a ribosome-associated complex that mediates the extraction of incompletely synthesized nascent chains from stalled ribosomes and their subsequent degradation. Probably generates substrates for RQC. In Streptococcus thermophilus (strain CNRZ 1066), this protein is Endonuclease MutS2.